The following is a 416-amino-acid chain: Serine/threonine-protein kinase 26 (416 aa).

A2 is modified (N-acetylalanine). Phosphoserine is present on S4. One can recognise a Protein kinase domain in the interval 24–274; the sequence is FTKLERIGKG…AKELLKHKFI (251 aa). ATP is bound by residues 30-38 and K53; that span reads IGKGSFGEV. D144 (proton acceptor) is an active-site residue. Position 178 is a phosphothreonine; by autocatalysis (T178). The segment at 296 to 343 is disordered; the sequence is AEGHSDEESDSEGSDSESSSRESNPHPEWSFTTVRKKPDPKKLQNGEE. Residues S300, S304, S306, S309, and S325 each carry the phosphoserine modification. 2 positions are modified to phosphothreonine: T327 and T328. Residues 331 to 340 are compositionally biased toward basic and acidic residues; sequence KKPDPKKLQN.

This sequence belongs to the protein kinase superfamily. STE Ser/Thr protein kinase family. STE20 subfamily. In terms of assembly, homodimer. Interacts with PDCD10. Interacts with GOLGA2. Interacts with CTTNBP2NL. Interacts with RIPOR1 (via C-terminus); this interaction occurs in a PDCD10-dependent and Rho-independent manner. Interacts with PDCD10; this interaction is required for the association of STK26 with RIPOR1. Part of the core of STRIPAK complexes composed of PP2A catalytic and scaffolding subunits, the striatins (PP2A regulatory subunits), the striatin-associated proteins MOB4, STRIP1 and STRIP2, PDCD10 and members of the STE20 kinases, such as STK24 and STK26. It depends on Mg(2+) as a cofactor.

The protein resides in the cytoplasm. It localises to the golgi apparatus. The enzyme catalyses L-seryl-[protein] + ATP = O-phospho-L-seryl-[protein] + ADP + H(+). It catalyses the reaction L-threonyl-[protein] + ATP = O-phospho-L-threonyl-[protein] + ADP + H(+). Interaction with Golgi matrix protein GOLGA2 leads to autophosphorylation on Thr-178, possibly as a consequence of stabilization of dimer formation. May also be activated by C-terminal cleavage. In terms of biological role, serine/threonine-protein kinase that acts as a mediator of cell growth. Modulates apoptosis. In association with STK24 negatively regulates Golgi reorientation in polarized cell migration upon RHO activation. Phosphorylates ATG4B at 'Ser-383', thereby increasing autophagic flux. Part of the striatin-interacting phosphatase and kinase (STRIPAK) complexes. STRIPAK complexes have critical roles in protein (de)phosphorylation and are regulators of multiple signaling pathways including Hippo, MAPK, nuclear receptor and cytoskeleton remodeling. Different types of STRIPAK complexes are involved in a variety of biological processes such as cell growth, differentiation, apoptosis, metabolism and immune regulation. The sequence is that of Serine/threonine-protein kinase 26 from Mus musculus (Mouse).